The chain runs to 351 residues: Transmembrane protein 255A (351 aa).

4 helical membrane passes run 30 to 50 (IYVT…GLAA), 57 to 77 (VTVG…LGII), 89 to 109 (LVAS…CAIV), and 226 to 246 (TILN…LGGF). The tract at residues 302–331 (FPSSPPSGLSDEQEPQSPSPSPSYMWSSSA) is disordered.

The protein belongs to the TMEM255 family.

The protein localises to the membrane. The protein is Transmembrane protein 255A (Tmem255a) of Rattus norvegicus (Rat).